A 63-amino-acid polypeptide reads, in one-letter code: Large ribosomal subunit protein uL30 (63 aa).

Belongs to the universal ribosomal protein uL30 family. As to quaternary structure, part of the 50S ribosomal subunit.

The sequence is that of Large ribosomal subunit protein uL30 from Xylella fastidiosa (strain M23).